A 225-amino-acid polypeptide reads, in one-letter code: MSNETNCTLDFEQSVQLFKEYNLFITAFLLFLTIILQYGYATRSKVIYTLKMIVLWCFWPLNIAVGVISCIYPPNTGGLVAAIILTVFACLSFVGYWIQSIRLFKRCRSWWSFNPESNAVGSILLTNGQQCNFAIESVPMVLSPIIKNGVLYCEGQWLAKCEPDHLPKDIFVCTPDRRNIYRMVQKYTGDQSGNKKRFATFVYAKQSVDTGELESVATGGSSLYT.

Topologically, residues Met-1–Glu-20 are virion surface. Asn-3 and Asn-6 each carry an N-linked (GlcNAc...) asparagine; by host glycan. A helical transmembrane segment spans residues Tyr-21 to Ala-41. The Intravirion segment spans residues Thr-42–Lys-51. A helical transmembrane segment spans residues Met-52 to Tyr-72. Over Pro-73–Gly-77 the chain is Virion surface. The chain crosses the membrane as a helical span at residues Gly-78–Ile-98. Topologically, residues Gln-99–Thr-225 are intravirion.

This sequence belongs to the gammacoronaviruses M protein family. Homomultimer. Interacts with envelope E protein in the budding compartment of the host cell, which is located between endoplasmic reticulum and the Golgi complex. Forms a complex with HE and S proteins. Interacts with nucleocapsid N protein. This interaction probably participates in RNA packaging into the virus.

The protein localises to the virion membrane. The protein resides in the host Golgi apparatus membrane. Functionally, component of the viral envelope that plays a central role in virus morphogenesis and assembly via its interactions with other viral proteins. The protein is Membrane protein of Gallus gallus (Chicken).